Here is a 113-residue protein sequence, read N- to C-terminus: Protein USP2 (113 aa).

Positions 1–18 (MKITMFFAALSAASGVFA) are cleaved as a signal peptide. A run of 6 repeats spans residues 32 to 37 (IGAGVG), 40 to 45 (IGAGVG), 46 to 49 (SYGY), 50 to 53 (PYGA), 59 to 65 (LQLLPLR), and 69 to 75 (LRRLPLR). The tract at residues 32 to 45 (IGAGVGIGIGAGVG) is 2 X 6 AA repeats. Positions 46-53 (SYGYPYGA) are 2 X 4 AA approximate tandem repeats. The segment at 59–75 (LQLLPLRWLPLRRLPLR) is 2 X 7 AA approximate repeats.

Its subcellular location is the secreted. The protein is Protein USP2 (USP2) of Puccinia graminis (Black stem rust fungus).